A 499-amino-acid chain; its full sequence is UDP-N-acetylmuramoylalanine--D-glutamate ligase (499 aa).

128–134 (GTNGKTT) serves as a coordination point for ATP.

This sequence belongs to the MurCDEF family.

The protein resides in the cytoplasm. It carries out the reaction UDP-N-acetyl-alpha-D-muramoyl-L-alanine + D-glutamate + ATP = UDP-N-acetyl-alpha-D-muramoyl-L-alanyl-D-glutamate + ADP + phosphate + H(+). Its pathway is cell wall biogenesis; peptidoglycan biosynthesis. Its function is as follows. Cell wall formation. Catalyzes the addition of glutamate to the nucleotide precursor UDP-N-acetylmuramoyl-L-alanine (UMA). The protein is UDP-N-acetylmuramoylalanine--D-glutamate ligase of Rhodococcus jostii (strain RHA1).